Consider the following 567-residue polypeptide: Urease subunit alpha (567 aa).

The Urease domain occupies 128–567 (GGIDPHIHFI…LPLAQLYHLF (440 aa)). H133, H135, and K216 together coordinate Ni(2+). The residue at position 216 (K216) is an N6-carboxylysine. H218 lines the substrate pocket. Ni(2+) is bound by residues H245 and H271. Residue H319 is the Proton donor of the active site. Residue D359 coordinates Ni(2+).

This sequence belongs to the metallo-dependent hydrolases superfamily. Urease alpha subunit family. In terms of assembly, heterotrimer of UreA (gamma), UreB (beta) and UreC (alpha) subunits. Three heterotrimers associate to form the active enzyme. Ni cation serves as cofactor. In terms of processing, carboxylation allows a single lysine to coordinate two nickel ions.

It is found in the cytoplasm. The enzyme catalyses urea + 2 H2O + H(+) = hydrogencarbonate + 2 NH4(+). It functions in the pathway nitrogen metabolism; urea degradation; CO(2) and NH(3) from urea (urease route): step 1/1. This Marinobacter nauticus (strain ATCC 700491 / DSM 11845 / VT8) (Marinobacter aquaeolei) protein is Urease subunit alpha.